Reading from the N-terminus, the 536-residue chain is Protein ST7 homolog (536 aa).

Transmembrane regions (helical) follow at residues 3–23 and 49–69; these read CSWTFLWLLWIAMVAVLLFFL and FYVALTGTSSLVSGIILIFEW. Residues 192–219 are a coiled coil; sequence AEEDTETVAQAENVLRRALRAIENTLST. The helical transmembrane segment at 464–484 threads the bilayer; the sequence is STLGMLIQTFACLAICILAVL.

The protein belongs to the ST7 family.

Its subcellular location is the membrane. This is Protein ST7 homolog from Caenorhabditis briggsae.